Consider the following 167-residue polypeptide: Putative C-type lectin-like domain family 1 (167 aa).

Over 1–67 (MVSNFFHVIQ…KYDCPFSGTS (67 aa)) the chain is Cytoplasmic. A helical; Signal-anchor for type II membrane protein membrane pass occupies residues 68–88 (FVVFSLFLICAMAGDVVYADI). The Extracellular portion of the chain corresponds to 89–167 (KTVRTSPLEL…DITAMVRFNI (79 aa)). 3 N-linked (GlcNAc...) asparagine glycosylation sites follow: Asn-109, Asn-140, and Asn-149. The C-type lectin; atypical domain maps to 116-167 (SCPAKDWKVHKGKCYWIAETKKSWNKSQNDCAINNSYLMVIQDITAMVRFNI).

Expressed in spleen, lymph node, and tonsil. Lower expression in peripheral blood, bone marrow, and colon. No expression detected in thymus. Highly expressed in dendritic and B-cells.

The protein resides in the cell membrane. Its function is as follows. May function in mediating immune cell-cell interactions. May act as a T-cell costimulatory molecule, enhancing anti-CD3-induced proliferation. May play a role in the interaction of dendritic cells with T-cells and the cells of the adaptive immune response. The chain is Putative C-type lectin-like domain family 1 from Homo sapiens (Human).